Here is a 278-residue protein sequence, read N- to C-terminus: ATP-dependent dethiobiotin synthetase BioD 1 (278 aa).

51–56 is an ATP binding site; the sequence is NVGKTI. Thr-55 contacts Mg(2+). Lys-76 is an active-site residue. Asp-102 is a binding site for ATP. Mg(2+) contacts are provided by Asp-102 and Glu-163. Residues 223 to 224 and 252 to 254 each bind ATP; these read NR and PYI.

This sequence belongs to the dethiobiotin synthetase family. As to quaternary structure, homodimer. Requires Mg(2+) as cofactor.

The protein resides in the cytoplasm. It carries out the reaction (7R,8S)-7,8-diammoniononanoate + CO2 + ATP = (4R,5S)-dethiobiotin + ADP + phosphate + 3 H(+). Its pathway is cofactor biosynthesis; biotin biosynthesis; biotin from 7,8-diaminononanoate: step 1/2. Functionally, catalyzes a mechanistically unusual reaction, the ATP-dependent insertion of CO2 between the N7 and N8 nitrogen atoms of 7,8-diaminopelargonic acid (DAPA, also called 7,8-diammoniononanoate) to form a ureido ring. This Haemophilus ducreyi (strain 35000HP / ATCC 700724) protein is ATP-dependent dethiobiotin synthetase BioD 1.